We begin with the raw amino-acid sequence, 1290 residues long: Alpha-factor-transporting ATPase (1290 aa).

The Cytoplasmic portion of the chain corresponds to 1-25; it reads MNFLSFKTTKHYHIFRYVNIRNDYR. A helical transmembrane segment spans residues 26–46; that stretch reads LLMIMIIGTVATGLVPAITSI. The ABC transmembrane type-1 1 domain maps to 27–319; sequence LMIMIIGTVA…TLHQIVVLQK (293 aa). At 47–75 the chain is on the extracellular side; that stretch reads LTGRVFDLLSVFVANGSHQGLYSQLVQRS. Asn61 carries N-linked (GlcNAc...) asparagine glycosylation. Residues 76 to 96 traverse the membrane as a helical segment; the sequence is MAVMALGAASVPVMWLSLTSW. Over 97–150 the chain is Cytoplasmic; sequence MHIGERQGFRIRSQILEAYLEEKPMEWYDNNEKLLGDFTQINRCVEELRSSSAE. A helical transmembrane segment spans residues 151 to 171; sequence ASAITFQNLVAICALLGTSFY. Over 172–173 the chain is Extracellular; it reads YS. Residues 174–194 form a helical membrane-spanning segment; it reads WSLTLIILCSSPIITFFAVVF. Over 195-262 the chain is Cytoplasmic; the sequence is SRMIHVYSEK…SCFFVAANAG (68 aa). The helical transmembrane segment at 263–283 threads the bilayer; that stretch reads ILRFLTLTMFVQGFWFGSAMI. At 284–296 the chain is on the extracellular side; it reads KKGKLNINDVITC. A helical transmembrane segment spans residues 297-317; sequence FHSCIMLGSTLNNTLHQIVVL. At 318 to 715 the chain is on the cytoplasmic side; the sequence is QKGGVAMEKI…RMIKSIRYKK (398 aa). An ABC transporter 1 domain is found at 357–603; the sequence is LTFANVSFSY…PTTTFSTWYH (247 aa). 392–399 provides a ligand contact to ATP; that stretch reads GKSGSGKS. The chain crosses the membrane as a helical span at residues 716–736; it reads ILILGLLCSLIAGATNPVFSY. Residues 717–1007 form the ABC transmembrane type-1 2 domain; that stretch reads LILGLLCSLI…LVSQIPDISR (291 aa). The Extracellular portion of the chain corresponds to 737 to 763; that stretch reads TFSFLLEGIVPSTDGKTGSSHYLAKWS. The chain crosses the membrane as a helical span at residues 764 to 784; it reads LLVLGVAAADGIFNFAKGFLL. At 785–838 the chain is on the cytoplasmic side; the sequence is DCCSEYWVMDLRNEVMEKLTRKNMDWFSGENNKASEISALVLNDLRDLRSLVSE. The chain crosses the membrane as a helical span at residues 839–859; that stretch reads FLSAMTSFVTVSTIGLIWALV. The Extracellular portion of the chain corresponds to 860–865; it reads SGWKLS. A helical membrane pass occupies residues 866–886; sequence LVCISMFPLIIIFSAIYGGIL. Residues 887-945 are Cytoplasmic-facing; that stretch reads QKCETDYKTSVAQLENCLYQIVTNIKTIKCLQAEFHFQLTYHDLKIKMQQIASKRAIAT. The helical transmembrane segment at 946 to 966 threads the bilayer; that stretch reads GFGISMTNMIVMCIQAIIYYY. Over 967–981 the chain is Extracellular; the sequence is GLKLVMIHEYTSKEM. Residues 982-1002 traverse the membrane as a helical segment; it reads FTTFTLLLFTIMSCTSLVSQI. Over 1003–1290 the chain is Cytoplasmic; it reads PDISRGQRAA…LFQIVSNQSS (288 aa). Lys1022 is covalently cross-linked (Glycyl lysine isopeptide (Lys-Gly) (interchain with G-Cter in ubiquitin)). An ABC transporter 2 domain is found at 1052–1287; that stretch reads VSIQNLTFAY…RGELFQIVSN (236 aa). 1087–1094 is a binding site for ATP; that stretch reads GESGTGKS.

This sequence belongs to the ABC transporter superfamily. Alpha-factor sex pheromone exporter (TC 3.A.1.206) family. Post-translationally, degraded via the ubiquitin system.

It is found in the membrane. The enzyme catalyses an [alpha-factor](in) + ATP + H2O = an [alpha-factor](out) + ADP + phosphate + H(+). Functionally, STE6 is required in yeast MATA cells for production of A-factor pheromone. STE6 is involved in the transport of the farnesyl-derivation of the A-factor pheromone. The protein is Alpha-factor-transporting ATPase (STE6) of Saccharomyces cerevisiae (strain ATCC 204508 / S288c) (Baker's yeast).